Here is a 314-residue protein sequence, read N- to C-terminus: Homoserine O-succinyltransferase (314 aa).

C142 (acyl-thioester intermediate) is an active-site residue. K163 and S192 together coordinate substrate. Residue H235 is the Proton acceptor of the active site. The active site involves E237. R249 lines the substrate pocket.

Belongs to the MetA family.

The protein resides in the cytoplasm. The enzyme catalyses L-homoserine + succinyl-CoA = O-succinyl-L-homoserine + CoA. Its pathway is amino-acid biosynthesis; L-methionine biosynthesis via de novo pathway; O-succinyl-L-homoserine from L-homoserine: step 1/1. In terms of biological role, transfers a succinyl group from succinyl-CoA to L-homoserine, forming succinyl-L-homoserine. This chain is Homoserine O-succinyltransferase, found in Shewanella sediminis (strain HAW-EB3).